A 275-amino-acid polypeptide reads, in one-letter code: MRMTSSSFVSYCTPGLCQFMAMLPTAGHLLPLLLVIGTGGTVPSPQVPPRGCYVAKEAGERTFRCSQAGLSAVPSGIPNDTRKLYLDANQLASVPAGAFQHLPVLEELDLSHNALAHLSGAAFQGLEGTLRHLDLSANQLASVPVEAFVGLQIQVNLSANPWHCDCALQEVLRQVRLVPGTGTGIVCGSGARPDLVGQEFLLLAGEEELCGSGWGGARRSTDVALLVTMGGWLTLMVAYLVHYVWQNRDETRRSLKRAPVLPVRSEDSSILSTVV.

The first 41 residues, 1 to 41 (MRMTSSSFVSYCTPGLCQFMAMLPTAGHLLPLLLVIGTGGT), serve as a signal peptide directing secretion. In terms of domain architecture, LRRNT spans 42–79 (VPSPQVPPRGCYVAKEAGERTFRCSQAGLSAVPSGIPN). LRR repeat units follow at residues 80–101 (DTRK…AFQH), 104–125 (VLEE…AFQG), and 129–150 (TLRH…AFVG). N-linked (GlcNAc...) asparagine glycosylation occurs at asparagine 156. In terms of domain architecture, LRRCT spans 160–212 (NPWHCDCALQEVLRQVRLVPGTGTGIVCGSGARPDLVGQEFLLLAGEEELCGS). Residues 225 to 245 (LLVTMGGWLTLMVAYLVHYVW) traverse the membrane as a helical segment.

This sequence belongs to the LRRC3 family.

The protein resides in the membrane. This chain is Leucine-rich repeat-containing protein 3C (LRRC3C), found in Homo sapiens (Human).